The sequence spans 540 residues: Telomerase Cajal body protein 1 (540 aa).

A compositionally biased stretch (pro residues) spans 1-10 (MKTPEAPPLA). The disordered stretch occupies residues 1 to 126 (MKTPEAPPLA…GEDVEGVSEE (126 aa)). Phosphoserine occurs at positions 26, 30, 54, 64, 85, and 90. The segment covering 116-126 (PGEDVEGVSEE) has biased composition (acidic residues). 6 WD repeats span residues 158–197 (QPENFLKGCKWAPDGSCILTNSADNILRIYNLPPELYNEG), 213–258 (EGDT…LRAS), 263–304 (NHLD…RDCE), 314–355 (GQSG…ALLG), 356–396 (GHQG…HPLW), and 402–441 (VTTNQRIYFDLDPTGQFLVSGSTSGAVSVWDTGGAGLESK). T480 bears the Phosphothreonine mark. S482 bears the Phosphoserine mark. Residues 520 to 540 (SDAHQEEMGQGRTEGGGGEFT) are disordered. Residues 531-540 (RTEGGGGEFT) show a composition bias toward gly residues.

This sequence belongs to the TCAB1 family. In terms of assembly, component of the telomerase holoenzyme complex composed of one molecule of TERT, one molecule of WRAP53/TCAB1, two molecules of H/ACA ribonucleoprotein complex subunits DKC1, NOP10, NHP2 and GAR1, and a telomerase RNA template component (TERC). The telomerase holoenzyme complex is associated with TEP1, SMG6/EST1A and POT1. Interacts with the chaperonin-containing T-complex (TRiC) complex; which mediates the folding of WRAP53/TCAB1. Interacts with COIL. Interacts with SMN1. Interacts with RNF8. Interacts with histone H2AX. Post-translationally, phosphorylated at Ser-64 by ATM in response to DNA damage, promoting its interaction with histone H2AX and localization to sites of DNA double-strand breaks.

The protein localises to the nucleus. Its subcellular location is the cajal body. It localises to the chromosome. The protein resides in the telomere. Its function is as follows. RNA chaperone that plays a key role in telomere maintenance and RNA localization to Cajal bodies. Specifically recognizes and binds the Cajal body box (CAB box) present in both small Cajal body RNAs (scaRNAs) and telomerase RNA template component (TERC). Essential component of the telomerase holoenzyme complex, a ribonucleoprotein complex essential for the replication of chromosome termini that elongates telomeres in most eukaryotes. In the telomerase holoenzyme complex, required to stimulate the catalytic activity of the complex. Acts by specifically binding the CAB box of the TERC RNA and controlling the folding of the CR4/CR5 region of the TERC RNA, a critical step for telomerase activity. In addition, also controls telomerase holoenzyme complex localization to Cajal body. During S phase, required for delivery of TERC to telomeres during S phase and for telomerase activity. In addition to its role in telomere maintenance, also required for Cajal body formation, probably by mediating localization of scaRNAs to Cajal bodies. Also plays a role in DNA repair: phosphorylated by ATM in response to DNA damage and relocalizes to sites of DNA double-strand breaks to promote the repair of DNA double-strand breaks. Acts by recruiting the ubiquitin ligase RNF8 to DNA breaks and promote both homologous recombination (HR) and non-homologous end joining (NHEJ). In Bos taurus (Bovine), this protein is Telomerase Cajal body protein 1.